The primary structure comprises 1151 residues: ATP-dependent RNA helicase ddx46 (1151 aa).

2 stretches are compositionally biased toward basic and acidic residues: residues 1 to 26 (MDEY…DNRN) and 35 to 51 (YRDD…DRSH). Disordered stretches follow at residues 1 to 138 (MDEY…SRFD), 166 to 224 (MYQQ…VFQQ), 287 to 358 (QELK…PLVN), and 424 to 449 (TSQM…DKTI). The segment covering 52-73 (YNNNNNNNNNNNNNNNNNNGNG) has biased composition (low complexity). The segment covering 81–90 (SSQNKYQNHH) has biased composition (polar residues). Composition is skewed to low complexity over residues 91-124 (QQSP…QPHI), 166-199 (MYQQ…FQHH), 207-224 (QPPV…VFQQ), and 291-339 (ASGS…TTSP). Over residues 428–443 (IDDDEKLEEESEGEDD) the composition is skewed to acidic residues. The Q motif motif lies at 509 to 537 (QSWAQAGLTEKVHLLLKKFQYEKPTSIQA). A Helicase ATP-binding domain is found at 540 to 718 (IPAIMNGRDL…KKILNKPLEI (179 aa)). 553–560 (ARTGSGKT) is an ATP binding site. A DEAD box motif is present at residues 666-669 (DEAD). The Helicase C-terminal domain occupies 729–890 (DIEQFVEVRP…KVPDELRKLN (162 aa)). Residues 904-972 (LLAPTGFTGR…EKEKQLLSEK (69 aa)) form a disordered region. Positions 915-930 (HKFDAAEEDKKNIERK) are enriched in basic and acidic residues. Residues 938–948 (IEEEEEEEDED) are compositionally biased toward acidic residues. The span at 949–972 (KEKAEKEKLAAASAEKEKQLLSEK) shows a compositional bias: basic and acidic residues.

Belongs to the DEAD box helicase family. DDX46/PRP5 subfamily. As to quaternary structure, component of the 17S U2 SnRNP complex, a ribonucleoprotein complex that contains small nuclear RNA (snRNA) U2 and a number of specific proteins.

It is found in the nucleus speckle. It carries out the reaction ATP + H2O = ADP + phosphate + H(+). Component of the 17S U2 SnRNP complex of the spliceosome, a large ribonucleoprotein complex that removes introns from transcribed pre-mRNAs. This Dictyostelium discoideum (Social amoeba) protein is ATP-dependent RNA helicase ddx46 (helB1).